The following is a 701-amino-acid chain: Polyribonucleotide nucleotidyltransferase (701 aa).

Positions 485 and 491 each coordinate Mg(2+). Residues 552–611 form the KH domain; it reads PKIFKTTVDPEKIRDIIGPGGKMINKIIAETNVKIDIEPDGRIFVAAPDDISGNRAISMI. In terms of domain architecture, S1 motif spans 621-689; that stretch reads GQFFLGKVTR…KLGRLSLSRK (69 aa).

Belongs to the polyribonucleotide nucleotidyltransferase family. Mg(2+) serves as cofactor.

It is found in the cytoplasm. It carries out the reaction RNA(n+1) + phosphate = RNA(n) + a ribonucleoside 5'-diphosphate. Involved in mRNA degradation. Catalyzes the phosphorolysis of single-stranded polyribonucleotides processively in the 3'- to 5'-direction. The chain is Polyribonucleotide nucleotidyltransferase from Caldicellulosiruptor bescii (strain ATCC BAA-1888 / DSM 6725 / KCTC 15123 / Z-1320) (Anaerocellum thermophilum).